The sequence spans 1113 residues: Protein KIBRA (1113 aa).

WW domains follow at residues 6–39 and 53–86; these read LPLP…DPRD and DELP…DPRV. 2 coiled-coil regions span residues 107–193 and 293–431; these read LSAQ…RGFQ and NSNN…SSMQ. Ser141 is subject to Phosphoserine. Disordered stretches follow at residues 429–448 and 522–547; these read SMQS…SRGS and RSLS…SPPC. Residues 522-532 are compositionally biased toward polar residues; that stretch reads RSLSGTPKSMT. The span at 533-542 shows a compositional bias: low complexity; the sequence is SLSPRSSLSS. Ser535 is modified (phosphoserine). Residue Ser542 is modified to Phosphoserine; by CDK1. One can recognise a C2 domain in the interval 658-781; it reads GATRIQIALK…RSGERSTRWY (124 aa). Residues 825–975 are disordered; that stretch reads LEKRQEGRSS…RSVRMKRPSS (151 aa). An interaction with histone H3 region spans residues 839-1113; the sequence is EDSWRYEETS…NIPALSADDV (275 aa). Positions 847–870 are enriched in acidic residues; the sequence is TSENEAVAEEEEEEVEEEEGEEDV. At Ser899 the chain carries Phosphoserine. Thr912 carries the phosphothreonine modification. The span at 924-938 shows a compositional bias: polar residues; the sequence is IIRSKTFSPGPQSQY. Ser927 bears the Phosphoserine mark. Residue Thr929 is modified to Phosphothreonine. Ser931 carries the phosphoserine; by CDK1 modification. Residue Ser947 is modified to Phosphoserine. Interaction with PRKCZ regions lie at residues 953–996 and 956–975; these read SKKP…LDLQ and PPFV…RPSS. 2 positions are modified to phosphoserine; by PKC/PRKCZ: Ser975 and Ser978. Positions 1001-1032 form a coiled coil; that stretch reads WHSQLTQEISVLKELKEQLEQAKSHGEKELPQ. The ADDV motif motif lies at 1111–1113; the sequence is DDV.

Belongs to the WWC family. KIBRA subfamily. Homodimer. Forms heterodimers with WWC2 and WWC3. Interacts with DDN. Interacts with DYNLL1 and histone H3. The interaction with DYNLL1 is mandatory for the recruitment and transactivation functions of ESR1 or DYNLL1 to the target chromatin and the interaction with histone H3 ensures proper regulatory interaction of WWC1-DYNLL1-ESR1 complexes with target chromatin. Interacts (via WW domains) with DDR1 (via PPxY motif) in a collagen-regulated manner. Interacts with PRKCZ (via the protein kinase domain). Forms a tripartite complex with DDR1 and PRKCZ, but predominantly in the absence of collagen. Interacts (via the ADDV motif) with PATJ (via PDZ domain 8). Interacts (via WW domains) with SYNPO (via PPxY motifs). Interacts with NF2 and SNX4. Interacts with DLC1 and PRKCZ. Interacts (via WW domains) with LATS1 and LATS2. In terms of processing, phosphorylation at Ser-542 and Ser-931 by CDK1 in response to spindle damage stress regulates mitotic exit, these two sites are dephosphorylated by CDC14B. Expressed in mammary epithelial cells and breast cancer cell lines. Found in the luminal epithelium surrounding the ducts in the normal breast. In the brain, expressed in somatodendritic compartment of neurons in the cortex and hippocampus and in the cerebellum it is found in the Purkinje cells and some granule cells (at protein level). Detected in brain, heart, colon and kidney. In the kidney, expressed in glomerular podocytes, in some tubules and in the collecting duct.

Its subcellular location is the cytoplasm. It localises to the perinuclear region. The protein resides in the nucleus. The protein localises to the cell projection. It is found in the ruffle membrane. Its subcellular location is the cytosol. Regulator of the Hippo signaling pathway, also known as the Salvador-Warts-Hippo (SWH) pathway. Enhances phosphorylation of LATS1 and YAP1 and negatively regulates cell proliferation and organ growth due to a suppression of the transcriptional activity of YAP1, the major effector of the Hippo pathway. Along with NF2 can synergistically induce the phosphorylation of LATS1 and LATS2 and function in the regulation of Hippo signaling pathway. Acts as a transcriptional coactivator of ESR1 which plays an essential role in DYNLL1-mediated ESR1 transactivation. Regulates collagen-stimulated activation of the ERK/MAPK cascade. Modulates directional migration of podocytes. Plays a role in cognition and memory performance. Plays an important role in regulating AMPA-selective glutamate receptors (AMPARs) trafficking underlying synaptic plasticity and learning. The chain is Protein KIBRA from Homo sapiens (Human).